We begin with the raw amino-acid sequence, 902 residues long: Protein translocase subunit SecA (902 aa).

ATP contacts are provided by residues Q87, 105–109 (GEGKT), and D512. Residues 836 to 902 (DVEKVEEQHR…KFKQCCGKLK (67 aa)) form a disordered region. Over residues 840–863 (VEEQHRKSENAPREYQHEEVEHVG) the composition is skewed to basic and acidic residues. Zn(2+) contacts are provided by C886, C888, C897, and C898.

The protein belongs to the SecA family. As to quaternary structure, monomer and homodimer. Part of the essential Sec protein translocation apparatus which comprises SecA, SecYEG and auxiliary proteins SecDF-YajC and YidC. Requires Zn(2+) as cofactor.

It localises to the cell inner membrane. It is found in the cytoplasm. It carries out the reaction ATP + H2O + cellular proteinSide 1 = ADP + phosphate + cellular proteinSide 2.. Functionally, part of the Sec protein translocase complex. Interacts with the SecYEG preprotein conducting channel. Has a central role in coupling the hydrolysis of ATP to the transfer of proteins into and across the cell membrane, serving both as a receptor for the preprotein-SecB complex and as an ATP-driven molecular motor driving the stepwise translocation of polypeptide chains across the membrane. The polypeptide is Protein translocase subunit SecA (Pseudoalteromonas translucida (strain TAC 125)).